The chain runs to 90 residues: Evasin P1128 (90 aa).

Positions 1 to 18 (MFIALGIQLFVAVTYAAG) are cleaved as a signal peptide. 3 disulfide bridges follow: C29/C51, C33/C53, and C44/C64. N-linked (GlcNAc...) asparagine glycosylation occurs at N32.

The protein localises to the secreted. In terms of biological role, salivary chemokine-binding protein which binds to host chemokines CXCL1, CXCL2, CXCL3, CXCL5 and CXCL8. This chain is Evasin P1128, found in Ixodes ricinus (Common tick).